The primary structure comprises 21 residues: Cupiennin-6d (21 aa).

The residue at position 21 (S21) is a Serine amide.

As to expression, expressed by the venom gland.

The protein localises to the secreted. The chain is Cupiennin-6d from Cupiennius salei (American wandering spider).